We begin with the raw amino-acid sequence, 195 residues long: HTH-type transcriptional regulator TtmR (195 aa).

The 131-residue stretch at Asp-47–Asp-177 folds into the HTH marR-type domain. A DNA-binding region (H-T-H motif) is located at residues Val-93–Ala-116.

Its subcellular location is the cytoplasm. Formaldehyde-responsive transcription factor that modulates resistance to stress induced by formaldehyde. Impacts the expression of a number of genes encoding transcription factors and/or involved in stress response, including efgA, and which probably collectively trigger a formaldehyde-specific physiological response. Required for optimal transition to methylotrophy. Not involved in a general stress response. This is HTH-type transcriptional regulator TtmR from Methylorubrum extorquens (strain PA1) (Methylobacterium extorquens).